The following is a 254-amino-acid chain: CRISPR-associated endonuclease Cas1 (254 aa).

Mn(2+) is bound by residues Glu-78, His-146, and Glu-161.

It belongs to the CRISPR-associated endonuclease Cas1 family. As to quaternary structure, homodimer, forms a heterotetramer with a Cas2 homodimer. Requires Mg(2+) as cofactor. The cofactor is Mn(2+).

In terms of biological role, CRISPR (clustered regularly interspaced short palindromic repeat), is an adaptive immune system that provides protection against mobile genetic elements (viruses, transposable elements and conjugative plasmids). CRISPR clusters contain spacers, sequences complementary to antecedent mobile elements, and target invading nucleic acids. CRISPR clusters are transcribed and processed into CRISPR RNA (crRNA). Acts as a dsDNA endonuclease. Involved in the integration of spacer DNA into the CRISPR cassette. The protein is CRISPR-associated endonuclease Cas1 of Leptospira interrogans serogroup Icterohaemorrhagiae serovar Lai (strain 56601).